Here is a 334-residue protein sequence, read N- to C-terminus: O-methyltransferase SfmM3 (334 aa).

S-adenosyl-L-methionine contacts are provided by residues Asp190 and 216 to 218 (GDF). His236 acts as the Proton acceptor in catalysis.

It belongs to the class I-like SAM-binding methyltransferase superfamily. Cation-independent O-methyltransferase family. COMT subfamily.

The catalysed reaction is 5-hydroxy-3-methyl-L-tyrosine + S-adenosyl-L-methionine = 5-hydroxy-3-methyl-O-methyl-L-tyrosine + S-adenosyl-L-homocysteine + H(+). The protein operates within antibiotic biosynthesis. O-methyltransferase that mediates the methylation of 3-hydroxy-5-methyl-L-tyrosine (3-OH-5-Me-Tyr) into 3-hydroxy-5-methyl-O-methyltyrosine (3-OH-5-Me-OMe-Tyr), a core structure of saframycin A, a potent antitumor antibiotic that belongs to the tetrahydroisoquinoline family. This Streptomyces lavendulae protein is O-methyltransferase SfmM3.